A 284-amino-acid polypeptide reads, in one-letter code: Tropomyosin (284 aa).

A coiled-coil region spans residues 1-280; the sequence is MDAIKKKMQA…SDELDQTFAE (280 aa).

The protein belongs to the tropomyosin family. In terms of assembly, homodimer.

Its function is as follows. Tropomyosin, in association with the troponin complex, plays a central role in the calcium dependent regulation of muscle contraction. The polypeptide is Tropomyosin (Sinonovacula constricta (Razor clam)).